A 424-amino-acid polypeptide reads, in one-letter code: CinA-like protein (424 aa).

This sequence belongs to the CinA family.

The sequence is that of CinA-like protein from Shewanella putrefaciens (strain CN-32 / ATCC BAA-453).